The following is a 1314-amino-acid chain: Angiotensin-converting enzyme (1314 aa).

The signal sequence occupies residues 1-35; it reads MGAASGQRGQGPPSPLLLLWLSLLLLLLPPSPAPA. Over 36–1265 the chain is Extracellular; that stretch reads LDPGLQPGNF…LEPQQARVGQ (1230 aa). N-linked (GlcNAc...) asparagine glycosylation is found at N44, N60, N80, N117, and N166. Peptidase M2 domains follow at residues 46 to 630 and 649 to 1228; these read SADE…LGWP and VTDE…LGWP. Cysteines 163 and 171 form a disulfide. Chloride is bound at residue Y237. Residue N324 is glycosylated (N-linked (GlcNAc...) asparagine). Cysteines 365 and 383 form a disulfide. H396 is a binding site for Zn(2+). Catalysis depends on E397, which acts as the Proton acceptor 1. Residues H400 and E424 each coordinate Zn(2+). An N-linked (GlcNAc...) asparagine glycan is attached at N515. The active-site Proton donor 1 is the H526. Position 535 (R535) interacts with chloride. C551 and C563 are oxidised to a cystine. N-linked (GlcNAc...) asparagine glycans are attached at residues N683, N701, N720, and N766. A disulfide bridge links C763 with C769. Chloride contacts are provided by R797 and Y835. N-linked (GlcNAc...) asparagine glycosylation is present at N948. C963 and C981 are joined by a disulfide. H994 contacts Zn(2+). E995 (proton acceptor 2) is an active-site residue. The Zn(2+) site is built by H998 and E1022. Chloride contacts are provided by W1096 and R1100. The Proton donor 2 role is filled by H1124. R1133 contributes to the chloride binding site. A disulfide bridge links C1149 with C1161. N-linked (GlcNAc...) asparagine glycosylation is present at N1197. Residues 1221 to 1262 are juxtamembrane stalk; that stretch reads HGETLGWPEYNWTPNTARSEGPFPESGRVNFLGMYLEPQQAR. Residues 1266 to 1282 traverse the membrane as a helical segment; that stretch reads WVLLFLGVSLLVATLGL. Residues 1283–1314 are Cytoplasmic-facing; it reads THRLFSIRQHGHSLHRPHRGPQFGSEVELRHS. Residues 1293 to 1314 are disordered; that stretch reads GHSLHRPHRGPQFGSEVELRHS. Position 1307 is a phosphoserine (S1307).

Belongs to the peptidase M2 family. Monomer and homodimer; homodimerizes following binding to an inhibitor. Interacts with calmodulin (CALM1, CALM2 or CALM3); interaction takes place in the cytoplasmic region and regulates phosphorylation and proteolytic cleavage. Zn(2+) is required as a cofactor. Chloride serves as cofactor. Produced following proteolytic cleavage by secretase enzymes that cleave the transmembrane form in the juxtamembrane stalk region upstream of the transmembrane region. Cleavage can take place at different sites of the juxtamembrane stalk region. Post-translationally, phosphorylated by CK2 on Ser-1307; which allows membrane retention. Phosphorylated on tyrosine residues on its extracellular part, promoting cleavage by secretase enzymes and formation of the soluble form (Angiotensin-converting enzyme, soluble form). Widely expressed with dominant expression in lung and kidney.

It is found in the cell membrane. Its subcellular location is the cytoplasm. The protein localises to the secreted. The catalysed reaction is Release of a C-terminal dipeptide, oligopeptide-|-Xaa-Yaa, when Xaa is not Pro, and Yaa is neither Asp nor Glu. Thus, conversion of angiotensin I to angiotensin II, with increase in vasoconstrictor activity, but no action on angiotensin II.. It carries out the reaction angiotensin I + H2O = L-histidyl-L-leucine + angiotensin II. The enzyme catalyses bradykinin + H2O = L-Phe-L-Arg + bradykinin(1-7). It catalyses the reaction substance P + H2O = substance P(1-9) + L-Leu-L-Met-NH2. The catalysed reaction is substance P + H2O = substance P(1-8) + Gly-L-Leu-L-Met-NH2. It carries out the reaction substance P + H2O = L-Phe-L-Phe-Gly-L-Leu-L-Met-NH2 + substance P(1-6). The enzyme catalyses neurotensin + H2O = neurotensin(1-11) + L-isoleucyl-L-leucine. It catalyses the reaction goralatide + H2O = N-acetyl-L-seryl-L-aspartate + L-lysyl-L-proline. The catalysed reaction is Met-enkephalin + H2O = L-phenylalanyl-L-methionine + L-tyrosylglycylglycine. It carries out the reaction Leu-enkephalin + H2O = L-tyrosylglycylglycine + L-phenylalanyl-L-leucine. The enzyme catalyses Met-enkephalin-Arg-Phe + H2O = L-arginyl-L-phenylalanine + Met-enkephalin. The dipeptidyl carboxypeptidase activity is strongly activated by chloride. The dipeptidyl carboxypeptidase activity is specifically inhibited by lisinopril, captopril and enalaprilat. With respect to regulation, strongly inhibited by lisinopril and captopril. Its function is as follows. Dipeptidyl carboxypeptidase that removes dipeptides from the C-terminus of a variety of circulating hormones, such as angiotensin I, bradykinin or enkephalins, thereby playing a key role in the regulation of blood pressure, electrolyte homeostasis or synaptic plasticity. Composed of two similar catalytic domains, each possessing a functional active site, with different selectivity for substrates. Plays a major role in the angiotensin-renin system that regulates blood pressure and sodium retention by the kidney by converting angiotensin I to angiotensin II, resulting in an increase of the vasoconstrictor activity of angiotensin. Also able to inactivate bradykinin, a potent vasodilator, and therefore enhance the blood pressure response. Acts as a regulator of synaptic transmission by mediating cleavage of neuropeptide hormones, such as substance P, neurotensin or enkephalins. Catalyzes degradation of different enkephalin neuropeptides (Met-enkephalin, Leu-enkephalin, Met-enkephalin-Arg-Phe and possibly Met-enkephalin-Arg-Gly-Leu). Acts as a regulator of synaptic plasticity in the nucleus accumbens of the brain by mediating cleavage of Met-enkephalin-Arg-Phe, a strong ligand of Mu-type opioid receptor OPRM1, into Met-enkephalin. Met-enkephalin-Arg-Phe cleavage by ACE decreases activation of OPRM1, leading to long-term synaptic potentiation of glutamate release. Also acts as a regulator of hematopoietic stem cell differentiation by mediating degradation of hemoregulatory peptide N-acetyl-SDKP (AcSDKP). Acts as a regulator of cannabinoid signaling pathway by mediating degradation of hemopressin, an antagonist peptide of the cannabinoid receptor CNR1. Involved in amyloid-beta metabolism by catalyzing degradation of Amyloid-beta protein 40 and Amyloid-beta protein 42 peptides, thereby preventing plaque formation. Catalyzes cleavage of cholecystokinin (maturation of Cholecystokinin-8 and Cholecystokinin-5) and Gonadoliberin-1 (both maturation and degradation) hormones. Degradation of hemoregulatory peptide N-acetyl-SDKP (AcSDKP) and amyloid-beta proteins is mediated by the N-terminal catalytic domain, while angiotensin I and cholecystokinin cleavage is mediated by the C-terminal catalytic region. Functionally, soluble form that is released in blood plasma and other body fluids following proteolytic cleavage in the juxtamembrane stalk region. Isoform produced by alternative promoter usage that is specifically expressed in spermatocytes and adult testis, and which is required for male fertility. In contrast to somatic isoforms, only contains one catalytic domain. Acts as a dipeptidyl carboxypeptidase that removes dipeptides from the C-terminus of substrates. The identity of substrates that are needed for male fertility is unknown. May also have a glycosidase activity which releases GPI-anchored proteins from the membrane by cleaving the mannose linkage in the GPI moiety. The GPIase activity was reported to be essential for the egg-binding ability of the sperm. This activity is however unclear and has been challenged by other groups, suggesting that it may be indirect. The sequence is that of Angiotensin-converting enzyme from Mesocricetus auratus (Golden hamster).